Reading from the N-terminus, the 761-residue chain is Mitochondrial intermediate peptidase 1 (761 aa).

His530 provides a ligand contact to Zn(2+). The active site involves Glu531. Zn(2+) contacts are provided by His534 and His537.

The protein belongs to the peptidase M3 family. It depends on Zn(2+) as a cofactor.

Its subcellular location is the mitochondrion matrix. It carries out the reaction Release of an N-terminal octapeptide as second stage of processing of some proteins imported into the mitochondrion.. Cleaves proteins, imported into the mitochondrion, to their mature size. While most mitochondrial precursor proteins are processed to the mature form in one step by mitochondrial processing peptidase (MPP), the sequential cleavage by MIP of an octapeptide after initial processing by MPP is a required step for a subgroup of nuclear-encoded precursor proteins destined for the matrix or the inner membrane. This is Mitochondrial intermediate peptidase 1 (OCT1) from Cryptococcus neoformans var. neoformans serotype D (strain B-3501A) (Filobasidiella neoformans).